Here is a 414-residue protein sequence, read N- to C-terminus: Cytochrome P450 CYP105Q4 (414 aa).

Polar residues predominate over residues 1–12; it reads MSDTLASPSPET. The interval 1–21 is disordered; sequence MSDTLASPSPETASGIPDYPM. The heme site is built by histidine 108, glutamine 302, arginine 304, histidine 361, and cysteine 363.

It belongs to the cytochrome P450 family. Requires heme as cofactor.

Functionally, can bind oleic-acid derivatives, amphotericin B like precursors and a variety of nitrogen ligand donors. The polypeptide is Cytochrome P450 CYP105Q4 (Mycobacterium marinum (strain ATCC BAA-535 / M)).